We begin with the raw amino-acid sequence, 331 residues long: MSPDGNHSSDPTEFVLAGLPNLNSARVELFSVFLLVYLLNLTGNVLIVGVVRADTRLQTPMYFFLGNLSCLEILLTSVIIPKMLSNFLSRQHTISFAACITQFYFYFFLGASEFLLLAVMSADRYLAICHPLRYPLLMSGAVCFRVALACWVGGLVPVLGPTVAVALLPFCKQGAVVQHFFCDSGPLLRLACTNTKKLEETDFVLASLVIVSSLLITAVSYGLIVLAVLSIPSASGRQKAFSTCTSHLIVVTLFYGSAIFLYVRPSQSGSVDTNWAVTVITTFVTPLLNPFIYALRNEQVKEALKDMFRKVVAGVLGNLLLDKCLSEKAVK.

Residues 1-29 (MSPDGNHSSDPTEFVLAGLPNLNSARVEL) lie on the Extracellular side of the membrane. Residue asparagine 6 is glycosylated (N-linked (GlcNAc...) asparagine). The chain crosses the membrane as a helical span at residues 30 to 50 (FSVFLLVYLLNLTGNVLIVGV). The Cytoplasmic portion of the chain corresponds to 51 to 59 (VRADTRLQT). A helical membrane pass occupies residues 60-80 (PMYFFLGNLSCLEILLTSVII). Residues 81-99 (PKMLSNFLSRQHTISFAAC) lie on the Extracellular side of the membrane. A disulfide bridge connects residues cysteine 99 and cysteine 182. A helical membrane pass occupies residues 100–120 (ITQFYFYFFLGASEFLLLAVM). Residues 121–147 (SADRYLAICHPLRYPLLMSGAVCFRVA) lie on the Cytoplasmic side of the membrane. A helical membrane pass occupies residues 148–168 (LACWVGGLVPVLGPTVAVALL). The Extracellular portion of the chain corresponds to 169–207 (PFCKQGAVVQHFFCDSGPLLRLACTNTKKLEETDFVLAS). A helical membrane pass occupies residues 208-228 (LVIVSSLLITAVSYGLIVLAV). At 229-242 (LSIPSASGRQKAFS) the chain is on the cytoplasmic side. Residues 243 to 263 (TCTSHLIVVTLFYGSAIFLYV) traverse the membrane as a helical segment. Topologically, residues 264–274 (RPSQSGSVDTN) are extracellular. A helical transmembrane segment spans residues 275-295 (WAVTVITTFVTPLLNPFIYAL). The Cytoplasmic portion of the chain corresponds to 296–331 (RNEQVKEALKDMFRKVVAGVLGNLLLDKCLSEKAVK).

It belongs to the G-protein coupled receptor 1 family.

It localises to the cell membrane. Functionally, odorant receptor. The protein is Olfactory receptor 6S1 (OR6S1) of Homo sapiens (Human).